Consider the following 602-residue polypeptide: Elongation factor 4 (602 aa).

The region spanning 2–184 (NHIRNFSIIA…QIVAKVPAPR (183 aa)) is the tr-type G domain. Residues 14–19 (DHGKST) and 131–134 (NKMD) each bind GTP.

This sequence belongs to the TRAFAC class translation factor GTPase superfamily. Classic translation factor GTPase family. LepA subfamily.

It localises to the cell inner membrane. The catalysed reaction is GTP + H2O = GDP + phosphate + H(+). Its function is as follows. Required for accurate and efficient protein synthesis under certain stress conditions. May act as a fidelity factor of the translation reaction, by catalyzing a one-codon backward translocation of tRNAs on improperly translocated ribosomes. Back-translocation proceeds from a post-translocation (POST) complex to a pre-translocation (PRE) complex, thus giving elongation factor G a second chance to translocate the tRNAs correctly. Binds to ribosomes in a GTP-dependent manner. The polypeptide is Elongation factor 4 (Acidovorax ebreus (strain TPSY) (Diaphorobacter sp. (strain TPSY))).